The chain runs to 874 residues: Ectonucleotide pyrophosphatase/phosphodiesterase family member 3 (874 aa).

Topologically, residues 1–11 are cytoplasmic; that stretch reads MQSTLNLSTEE. A helical; Signal-anchor for type II membrane protein transmembrane segment spans residues 12 to 30; sequence PVKRNTVKKYKIICIVLLI. Topologically, residues 31-874 are extracellular; that stretch reads LLVAVSLALG…TYLPVFETVI (844 aa). 2 SMB domains span residues 50-93 and 94-138; these read EQGS…VQST and QIWT…GETS. Intrachain disulfides connect Cys54-Cys71, Cys58-Cys89, Cys69-Cys82, Cys75-Cys81, Cys98-Cys115, Cys103-Cys133, Cys113-Cys126, Cys119-Cys125, Cys144-Cys190, and Cys152-Cys364. Residues 78 to 80 carry the Cell attachment site motif; the sequence is RGD. The interval 160–544 is phosphodiesterase; it reads PVILFSMDGF…HGSLNHLLKV (385 aa). Asp167 contributes to the Zn(2+) binding site. An ATP-binding site is contributed by Lys204. Thr205 lines the Zn(2+) pocket. Catalysis depends on Thr205, which acts as the Nucleophile. Asn226 provides a ligand contact to ATP. Residue Asn236 is glycosylated (N-linked (GlcNAc...) asparagine). Asp275 is an ATP binding site. Residue Asn279 is glycosylated (N-linked (GlcNAc...) asparagine). Residue Tyr289 coordinates ATP. N-linked (GlcNAc...) asparagine glycosylation is present at Asn290. Positions 325, 329, 372, and 373 each coordinate Zn(2+). Cystine bridges form between Cys380/Cys477, Cys428/Cys817, Cys561/Cys622, Cys574/Cys678, Cys576/Cys663, and Cys786/Cys796. The N-linked (GlcNAc...) asparagine glycan is linked to Asn425. Position 482 (His482) interacts with Zn(2+). Asn532 carries an N-linked (GlcNAc...) asparagine glycan. The tract at residues 581–874 is nuclease; sequence TNSDLERVNQ…TYLPVFETVI (294 aa). Asn677, Asn686, and Asn698 each carry an N-linked (GlcNAc...) asparagine glycan. 4 residues coordinate Ca(2+): Asp751, Asp755, His757, and Asp759. Residues Asn770, Asn788, and Asn820 are each glycosylated (N-linked (GlcNAc...) asparagine).

Belongs to the nucleotide pyrophosphatase/phosphodiesterase family. In terms of assembly, monomer and homodimer. Requires Zn(2+) as cofactor. In terms of processing, N-glycosylated. N-glycosylation is necessary for normal transport to the cell membrane, but is not the apical targeting signal.

It is found in the cell membrane. Its subcellular location is the apical cell membrane. The protein localises to the secreted. The catalysed reaction is a ribonucleoside 5'-triphosphate + H2O = a ribonucleoside 5'-phosphate + diphosphate + H(+). The enzyme catalyses ATP + H2O = AMP + diphosphate + H(+). It catalyses the reaction CTP + H2O = CMP + diphosphate + H(+). It carries out the reaction GTP + H2O = GMP + diphosphate + H(+). The catalysed reaction is UTP + H2O = UMP + diphosphate + H(+). The enzyme catalyses UDP-N-acetyl-alpha-D-glucosamine + H2O = N-acetyl-alpha-D-glucosamine 1-phosphate + UMP + 2 H(+). It catalyses the reaction P(1),P(3)-bis(5'-adenosyl) triphosphate + H2O = AMP + ADP + 2 H(+). It carries out the reaction P(1),P(4)-bis(5'-adenosyl) tetraphosphate + H2O = AMP + ATP + 2 H(+). The catalysed reaction is P(1),P(5)-bis(5'-adenosyl) pentaphosphate + H2O = adenosine 5'-tetraphosphate + AMP + 2 H(+). The enzyme catalyses P(1),P(4)-bis(5'-guanosyl) tetraphosphate + H2O = GMP + GTP + 2 H(+). It catalyses the reaction Hydrolytically removes 5'-nucleotides successively from the 3'-hydroxy termini of 3'-hydroxy-terminated oligonucleotides.. Functionally, hydrolase that metabolizes extracellular nucleotides, including ATP, GTP, UTP and CTP. Limits mast cells and basophils response during inflammation and during the chronic phases of allergic responses by eliminating extracellular ATP, a signaling molecule activating these cells in an autocrine manner. Metabolizes extracellular ATP in the lumen of the small intestine, and thereby prevents ATP-induced apoptosis of intestinal plasmacytoid dendritic cells. Has a broad specificity and can also hydrolyze UDP-GlcNAc into UMP and GlcNAc-1-phosphate and potentially several other intracellular nucleotide sugars, including UDP-GalNAc, CMP-NeuAc, GDP-Fuc, and UDP-GlcA. Thereby, could modulate glycan biosynthesis and protein glycosylation. Can hydrolyze extracellular dinucleoside polyphosphates, including the vasoactive adenosine polyphosphates as well. In addition, displays an alkaline phosphodiesterase activity in vitro. The protein is Ectonucleotide pyrophosphatase/phosphodiesterase family member 3 (ENPP3) of Bos taurus (Bovine).